The sequence spans 373 residues: Glutamate 5-kinase (373 aa).

Position 15 (Lys-15) interacts with ATP. The substrate site is built by Ser-55, Asp-142, and Asn-154. ATP-binding positions include 174–175 (TD) and 216–222 (TGGMVTK). A PUA domain is found at 281 to 359 (SGKIIVDDGA…GEIEAILGYK (79 aa)).

It belongs to the glutamate 5-kinase family.

The protein resides in the cytoplasm. It carries out the reaction L-glutamate + ATP = L-glutamyl 5-phosphate + ADP. It functions in the pathway amino-acid biosynthesis; L-proline biosynthesis; L-glutamate 5-semialdehyde from L-glutamate: step 1/2. Its function is as follows. Catalyzes the transfer of a phosphate group to glutamate to form L-glutamate 5-phosphate. This is Glutamate 5-kinase from Geobacter sulfurreducens (strain ATCC 51573 / DSM 12127 / PCA).